The chain runs to 458 residues: Elongation factor 1-alpha (458 aa).

Gly-2 carries the post-translational modification N,N,N-trimethylglycine. Lys-3 carries the N6,N6-dimethyllysine; alternate modification. At Lys-3 the chain carries N6-methyllysine; alternate. Residues 5-240 enclose the tr-type G domain; that stretch reads KTHVNVVVIG…DAIEPPVRPS (236 aa). Residues 14–21 form a G1 region; the sequence is GHVDSGKS. 14 to 21 contributes to the GTP binding site; the sequence is GHVDSGKS. Lys-30 is modified (N6-methyllysine). The segment at 70-74 is G2; it reads GITID. Lys-79 bears the N6,N6,N6-trimethyllysine mark. Residues 91–94 are G3; it reads DAPG. Residues 91–95 and 153–156 each bind GTP; these read DAPGH and NKMD. Residues 153 to 156 are G4; the sequence is NKMD. A G5 region spans residues 192 to 194; that stretch reads SGW. The residue at position 316 (Lys-316) is an N6,N6-dimethyllysine; alternate. Residue Lys-316 is modified to N6-methyllysine; alternate. N6-methyllysine is present on Lys-390.

The protein belongs to the TRAFAC class translation factor GTPase superfamily. Classic translation factor GTPase family. EF-Tu/EF-1A subfamily.

It is found in the cytoplasm. This protein promotes the GTP-dependent binding of aminoacyl-tRNA to the A-site of ribosomes during protein biosynthesis. The protein is Elongation factor 1-alpha (TEF-1) of Mucor circinelloides f. lusitanicus (Mucor racemosus var. lusitanicus).